We begin with the raw amino-acid sequence, 434 residues long: Trigger factor (434 aa).

Residues 160-245 form the PPIase FKBP-type domain; the sequence is GDKAKINFVG…LNEVQAANLP (86 aa).

The protein belongs to the FKBP-type PPIase family. Tig subfamily.

Its subcellular location is the cytoplasm. The catalysed reaction is [protein]-peptidylproline (omega=180) = [protein]-peptidylproline (omega=0). Its function is as follows. Involved in protein export. Acts as a chaperone by maintaining the newly synthesized protein in an open conformation. Functions as a peptidyl-prolyl cis-trans isomerase. In Shewanella halifaxensis (strain HAW-EB4), this protein is Trigger factor.